A 225-amino-acid polypeptide reads, in one-letter code: uncharacterized protein (225 aa).

Residues 2–22 (TIFYLVFIAVIIIIILYVLYL) traverse the membrane as a helical segment. The N-linked (GlcNAc...) asparagine; by host glycan is linked to asparagine 73. Positions 114–146 (DYEDNYFNSNWNLKQLKNQLENLLREKNYKMVL) form a coiled coil. Residue asparagine 222 is glycosylated (N-linked (GlcNAc...) asparagine; by host).

It localises to the membrane. This is an uncharacterized protein from Acanthamoeba polyphaga (Amoeba).